Reading from the N-terminus, the 70-residue chain is NADH-ubiquinone oxidoreductase chain 3 (70 aa).

The helical transmembrane segment at 42 to 62 (FFVITLIFLIFDVEIYLLLPM) threads the bilayer.

The protein belongs to the complex I subunit 3 family.

It localises to the mitochondrion membrane. It carries out the reaction a ubiquinone + NADH + 5 H(+)(in) = a ubiquinol + NAD(+) + 4 H(+)(out). Its function is as follows. Core subunit of the mitochondrial membrane respiratory chain NADH dehydrogenase (Complex I) that is believed to belong to the minimal assembly required for catalysis. Complex I functions in the transfer of electrons from NADH to the respiratory chain. The immediate electron acceptor for the enzyme is believed to be ubiquinone. The sequence is that of NADH-ubiquinone oxidoreductase chain 3 (ND3) from Artemia salina (Brine shrimp).